A 283-amino-acid polypeptide reads, in one-letter code: Extensin (283 aa).

The signal sequence occupies residues Met-1 to Ala-24. The disordered stretch occupies residues Gly-27–Tyr-283. The span at Thr-36–Gly-45 shows a compositional bias: pro residues. Basic and acidic residues predominate over residues Pro-46–Pro-69. Composition is skewed to pro residues over residues Thr-70–Thr-264 and Ser-272–Tyr-283.

In terms of processing, hydroxylated on proline residues in the S-P-P-P-P repeat. Post-translationally, O-glycosylated on hydroxyprolines.

The protein resides in the secreted. Its subcellular location is the primary cell wall. Its function is as follows. Structural component in primary cell wall. In Sorghum bicolor (Sorghum), this protein is Extensin (HRGP).